Consider the following 153-residue polypeptide: Bacteriohemerythrin (153 aa).

Fe cation contacts are provided by H21, H57, E61, H76, H80, H115, and D120.

It belongs to the hemerythrin family. Monomer.

Oxygen-binding protein. May be involved in a storage mechanism or for delivery to oxygen-requiring enzymes. The oxygen-binding site contains two iron atoms. This is Bacteriohemerythrin from Pseudomonas paraeruginosa (strain DSM 24068 / PA7) (Pseudomonas aeruginosa (strain PA7)).